Here is an 878-residue protein sequence, read N- to C-terminus: Alanine--tRNA ligase (878 aa).

Zn(2+) is bound by residues histidine 562, histidine 566, cysteine 670, and histidine 674.

The protein belongs to the class-II aminoacyl-tRNA synthetase family. Zn(2+) serves as cofactor.

Its subcellular location is the cytoplasm. It catalyses the reaction tRNA(Ala) + L-alanine + ATP = L-alanyl-tRNA(Ala) + AMP + diphosphate. Catalyzes the attachment of alanine to tRNA(Ala) in a two-step reaction: alanine is first activated by ATP to form Ala-AMP and then transferred to the acceptor end of tRNA(Ala). Also edits incorrectly charged Ser-tRNA(Ala) and Gly-tRNA(Ala) via its editing domain. The chain is Alanine--tRNA ligase from Acinetobacter baylyi (strain ATCC 33305 / BD413 / ADP1).